Here is a 255-residue protein sequence, read N- to C-terminus: Imidazole glycerol phosphate synthase subunit HisF (255 aa).

Catalysis depends on residues aspartate 11 and aspartate 130.

This sequence belongs to the HisA/HisF family. Heterodimer of HisH and HisF.

The protein localises to the cytoplasm. The enzyme catalyses 5-[(5-phospho-1-deoxy-D-ribulos-1-ylimino)methylamino]-1-(5-phospho-beta-D-ribosyl)imidazole-4-carboxamide + L-glutamine = D-erythro-1-(imidazol-4-yl)glycerol 3-phosphate + 5-amino-1-(5-phospho-beta-D-ribosyl)imidazole-4-carboxamide + L-glutamate + H(+). It participates in amino-acid biosynthesis; L-histidine biosynthesis; L-histidine from 5-phospho-alpha-D-ribose 1-diphosphate: step 5/9. Functionally, IGPS catalyzes the conversion of PRFAR and glutamine to IGP, AICAR and glutamate. The HisF subunit catalyzes the cyclization activity that produces IGP and AICAR from PRFAR using the ammonia provided by the HisH subunit. This is Imidazole glycerol phosphate synthase subunit HisF from Rhodopseudomonas palustris (strain BisA53).